A 366-amino-acid polypeptide reads, in one-letter code: Probable dual-specificity RNA methyltransferase RlmN (366 aa).

The active-site Proton acceptor is Glu107. The Radical SAM core domain occupies 113-342 (AEERMTACLS…MAQKFHVTVR (230 aa)). Cys120 and Cys353 form a disulfide bridge. [4Fe-4S] cluster contacts are provided by Cys127, Cys131, and Cys134. Residues 177–178 (GE), Ser210, 233–235 (SLH), and Asn310 contribute to the S-adenosyl-L-methionine site. Cys353 serves as the catalytic S-methylcysteine intermediate.

It belongs to the radical SAM superfamily. RlmN family. [4Fe-4S] cluster serves as cofactor.

Its subcellular location is the cytoplasm. The catalysed reaction is adenosine(2503) in 23S rRNA + 2 reduced [2Fe-2S]-[ferredoxin] + 2 S-adenosyl-L-methionine = 2-methyladenosine(2503) in 23S rRNA + 5'-deoxyadenosine + L-methionine + 2 oxidized [2Fe-2S]-[ferredoxin] + S-adenosyl-L-homocysteine. It carries out the reaction adenosine(37) in tRNA + 2 reduced [2Fe-2S]-[ferredoxin] + 2 S-adenosyl-L-methionine = 2-methyladenosine(37) in tRNA + 5'-deoxyadenosine + L-methionine + 2 oxidized [2Fe-2S]-[ferredoxin] + S-adenosyl-L-homocysteine. In terms of biological role, specifically methylates position 2 of adenine 2503 in 23S rRNA and position 2 of adenine 37 in tRNAs. This is Probable dual-specificity RNA methyltransferase RlmN from Chlorobium chlorochromatii (strain CaD3).